Here is a 419-residue protein sequence, read N- to C-terminus: Pyrrolysine--tRNA ligase (419 aa).

The segment at Ala100–Arg157 is disordered. Residues Asn120–Thr141 are compositionally biased toward polar residues. Over residues Pro142–Ser154 the composition is skewed to low complexity.

It belongs to the class-II aminoacyl-tRNA synthetase family.

Its subcellular location is the cytoplasm. It catalyses the reaction tRNA(Pyl) + L-pyrrolysine + ATP = L-pyrrolysyl-tRNA(Pyl) + AMP + diphosphate. Catalyzes the attachment of pyrrolysine to tRNA(Pyl). Pyrrolysine is a lysine derivative encoded by the termination codon UAG. This chain is Pyrrolysine--tRNA ligase (pylS), found in Methanosarcina barkeri.